Here is a 1578-residue protein sequence, read N- to C-terminus: Mediator of RNA polymerase II transcription subunit 14 (1578 aa).

Residues Leu49–Leu53 carry the LXXLL motif 1 motif. The tract at residues Ser561 to Ser582 is disordered. A compositionally biased stretch (low complexity) spans Thr565–Thr580. An LXXLL motif 2 motif is present at residues Leu739–Leu743. Disordered regions lie at residues Arg1009–Lys1173 and Ala1510–Asn1578. The span at Ser1084–Thr1093 shows a compositional bias: polar residues. Composition is skewed to pro residues over residues Pro1095–Ser1104 and Pro1157–Gly1167. Composition is skewed to gly residues over residues Ala1510–Gly1521 and Met1547–Asn1578.

This sequence belongs to the Mediator complex subunit 14 family. Component of the Mediator complex.

The protein localises to the nucleus. Functionally, component of the Mediator complex, a coactivator involved in the regulated transcription of nearly all RNA polymerase II-dependent genes. Mediator functions as a bridge to convey information from gene-specific regulatory proteins to the basal RNA polymerase II transcription machinery. Mediator is recruited to promoters by direct interactions with regulatory proteins and serves as a scaffold for the assembly of a functional preinitiation complex with RNA polymerase II and the general transcription factors. The sequence is that of Mediator of RNA polymerase II transcription subunit 14 (MED14) from Aedes aegypti (Yellowfever mosquito).